The sequence spans 286 residues: uncharacterized protein (286 aa).

This is an uncharacterized protein from Acidianus convivator (ATV).